The chain runs to 328 residues: MQTTSWLEIAVEVDPEAVETVSEILARYGYNGGVVVEQSWIAGDEGPEFQYDPNRPVWLRTYLPLDAQAEETRQQIEHALWHVHQIRPLGPIQTRTLAEEDWANAWKQFYPVLRVGERTVIVPSWLEYQPQPNDVVLLLDPGMAFGTGLHPTTRLCLHLLERLVQPGQQVLDLGTGSGILAIAAAKLGAGQVLALDNDPIAVRVAHENVERNQVQDLVTVAEGSLGAGQAMGHWLSGDFGPETPDPTLHDNTPQATFDLIAANLIAKVLVLLAPDLATALKPGGLLISSGIIDVKEAEVVAAFAAVGLQQIERHVEGEWVALVHRRPQ.

S-adenosyl-L-methionine contacts are provided by threonine 153, glycine 174, aspartate 196, and asparagine 263.

It belongs to the methyltransferase superfamily. PrmA family.

It localises to the cytoplasm. It catalyses the reaction L-lysyl-[protein] + 3 S-adenosyl-L-methionine = N(6),N(6),N(6)-trimethyl-L-lysyl-[protein] + 3 S-adenosyl-L-homocysteine + 3 H(+). Its function is as follows. Methylates ribosomal protein L11. This chain is Ribosomal protein L11 methyltransferase, found in Chloroflexus aurantiacus (strain ATCC 29366 / DSM 635 / J-10-fl).